The primary structure comprises 402 residues: 2-pyrone synthase (402 aa).

The acetoacetyl-CoA site is built by Lys-60, Arg-63, Cys-169, Leu-272, Arg-274, Gly-310, Arg-312, and Ala-313. The active site involves Cys-169.

The protein belongs to the thiolase-like superfamily. Chalcone/stilbene synthases family. As to expression, expressed in both vegetative and reproductive organs. The expression is strong in the leaf, scape (the inflorescence stem) and corolla (both in the ligule and the unpigmented tube), moderate in the bract and carpel, detectable in the root and pappus but not detectable in the stamen.

It carries out the reaction 2 malonyl-CoA + acetyl-CoA + 2 H(+) = triacetate lactone + 2 CO2 + 3 CoA. Functionally, polyketide synthase, which uses acetyl-CoA and two condensation reactions with malonyl-CoA to form triacetic acid lactone (also called methylpyrone), a precursor of phytoalexin. May participate in insect and pathogen resistance. In Gerbera hybrida (Daisy), this protein is 2-pyrone synthase.